Reading from the N-terminus, the 161-residue chain is Cell cycle link protein (161 aa).

A binding to host SKP1 protein region spans residues 9-21 (MPDDVKREIKEIY). Residues 111 to 115 (LYCDE) carry the LXCXE motif, interaction with host RBR motif.

Interacts with host SKP1. Interacts (via LXCXE domain) with host retinoblastoma-related protein 2 (RBR2). Interacts (via LXCXE domain) with human RB1. Interacts (via LXCXE domain) with retinoblastoma-related proteins (RBR).

Its function is as follows. Interacts with and disrupts the function of host retinoblastoma-related proteins RBR, which are key regulators of the cell cycle. Induces transcriptional activation of E2F-regulated S-phase and G2/M-phase-specific genes. Inactivation of the ability of RBR to arrest the cell cycle leads to the stimulation of viral DNA replication. Acts as a suppressor of RNA-mediated gene silencing, also known as post-transcriptional gene silencing (PTGS), a mechanism of plant viral defense that limits the accumulation of viral RNAs. The protein is Cell cycle link protein (DNA-C) of Musa (BBTV).